The primary structure comprises 318 residues: Ribose-phosphate pyrophosphokinase (318 aa).

ATP is bound by residues 46-48 (DGE) and 105-106 (RQ). 2 residues coordinate Mg(2+): His139 and Asp178. Lys201 is a catalytic residue. D-ribose 5-phosphate is bound by residues Arg203, Asp227, and 231–235 (DTAGT).

It belongs to the ribose-phosphate pyrophosphokinase family. Class I subfamily. In terms of assembly, homohexamer. Mg(2+) is required as a cofactor.

It localises to the cytoplasm. It catalyses the reaction D-ribose 5-phosphate + ATP = 5-phospho-alpha-D-ribose 1-diphosphate + AMP + H(+). Its pathway is metabolic intermediate biosynthesis; 5-phospho-alpha-D-ribose 1-diphosphate biosynthesis; 5-phospho-alpha-D-ribose 1-diphosphate from D-ribose 5-phosphate (route I): step 1/1. Its function is as follows. Involved in the biosynthesis of the central metabolite phospho-alpha-D-ribosyl-1-pyrophosphate (PRPP) via the transfer of pyrophosphoryl group from ATP to 1-hydroxyl of ribose-5-phosphate (Rib-5-P). This is Ribose-phosphate pyrophosphokinase from Helicobacter pylori (strain J99 / ATCC 700824) (Campylobacter pylori J99).